A 145-amino-acid polypeptide reads, in one-letter code: MSLSAAEADLVGKSWAPVYANKDANGDAFLLSLFEKFPNNANYFADFKGKSIADIKASPKLRDVSSRIFTRLNEFVNNAADAGKMSAMLSQFASEHVGFGVGSAQFENVRSMFPAFVASLSAPPADDAWNKLFGLIVAALKAAGK.

An N-acetylserine modification is found at Ser2. The Globin domain occupies 2 to 145 (SLSAAEADLV…IVAALKAAGK (144 aa)). His96 lines the heme b pocket.

The protein belongs to the globin family. As to quaternary structure, monomer.

This chain is Globin, found in Aplysia kurodai (Kuroda's sea hare).